Reading from the N-terminus, the 353-residue chain is Photosystem II D2 protein (353 aa).

Residue T2 is modified to N-acetylthreonine. At T2 the chain carries Phosphothreonine. The chain crosses the membrane as a helical span at residues 41-61; the sequence is CAYFAVGGWFTGTTFVTSWYT. H118 is a chlorophyll a binding site. The helical transmembrane segment at 125-141 threads the bilayer; that stretch reads GFMLRQFELARSVQLRP. Pheophytin a contacts are provided by Q130 and N143. A helical transmembrane segment spans residues 153–166; sequence VFVSVFLIYPLGQS. H198 is a chlorophyll a binding site. The helical transmembrane segment at 208 to 228 threads the bilayer; sequence AALLCAIHGATVENTLFEDGD. 2 residues coordinate a plastoquinone: H215 and F262. H215 provides a ligand contact to Fe cation. H269 provides a ligand contact to Fe cation. The chain crosses the membrane as a helical span at residues 279–295; sequence GLWMSALGVVGLALNLR.

This sequence belongs to the reaction center PufL/M/PsbA/D family. PSII is composed of 1 copy each of membrane proteins PsbA, PsbB, PsbC, PsbD, PsbE, PsbF, PsbH, PsbI, PsbJ, PsbK, PsbL, PsbM, PsbT, PsbX, PsbY, PsbZ, Psb30/Ycf12, at least 3 peripheral proteins of the oxygen-evolving complex and a large number of cofactors. It forms dimeric complexes. The D1/D2 heterodimer binds P680, chlorophylls that are the primary electron donor of PSII, and subsequent electron acceptors. It shares a non-heme iron and each subunit binds pheophytin, quinone, additional chlorophylls, carotenoids and lipids. There is also a Cl(-1) ion associated with D1 and D2, which is required for oxygen evolution. The PSII complex binds additional chlorophylls, carotenoids and specific lipids. is required as a cofactor.

The protein resides in the plastid. It is found in the chloroplast thylakoid membrane. It carries out the reaction 2 a plastoquinone + 4 hnu + 2 H2O = 2 a plastoquinol + O2. Its function is as follows. Photosystem II (PSII) is a light-driven water:plastoquinone oxidoreductase that uses light energy to abstract electrons from H(2)O, generating O(2) and a proton gradient subsequently used for ATP formation. It consists of a core antenna complex that captures photons, and an electron transfer chain that converts photonic excitation into a charge separation. The D1/D2 (PsbA/PsbD) reaction center heterodimer binds P680, the primary electron donor of PSII as well as several subsequent electron acceptors. D2 is needed for assembly of a stable PSII complex. In Ipomoea purpurea (Common morning glory), this protein is Photosystem II D2 protein.